A 342-amino-acid chain; its full sequence is WW domain binding protein 1-like (342 aa).

Residues 42 to 62 (LWWFWLVWTIIIILSCCCVCH) form a helical membrane-spanning segment. Disordered regions lie at residues 133-247 (LPPQ…RRFT) and 292-320 (PGDE…RPPA). Positions 158–173 (SSPLSEPSRSSTRPPS) are enriched in low complexity. Serine 173 carries the post-translational modification Phosphoserine. The segment covering 212–240 (LDKDAECREELLKDDSSEHGAPDSKEKTP) has biased composition (basic and acidic residues).

It localises to the membrane. The polypeptide is WW domain binding protein 1-like (WBP1L) (Homo sapiens (Human)).